The primary structure comprises 373 residues: D-alanine--D-alanine ligase (373 aa).

In terms of domain architecture, ATP-grasp spans 156-363 (KKLLAADGLP…YPTLLATMIE (208 aa)). 184-239 (CERLGLPVFVKPARGGSSIGVSRVSSWDQLPAAVARARRHDPKVIVEAAISGRELE) contributes to the ATP binding site. Mg(2+)-binding residues include Asp-318, Glu-330, and Asn-332.

This sequence belongs to the D-alanine--D-alanine ligase family. Requires Mg(2+) as cofactor. Mn(2+) is required as a cofactor.

The protein localises to the cytoplasm. It carries out the reaction 2 D-alanine + ATP = D-alanyl-D-alanine + ADP + phosphate + H(+). The protein operates within cell wall biogenesis; peptidoglycan biosynthesis. Cell wall formation. This Mycobacterium tuberculosis (strain ATCC 25177 / H37Ra) protein is D-alanine--D-alanine ligase.